The following is a 211-amino-acid chain: tRNA (guanine-N(7)-)-methyltransferase (211 aa).

Positions 44, 69, 96, and 118 each coordinate S-adenosyl-L-methionine. The active site involves Asp-118. Position 122 (Lys-122) interacts with substrate. Residues 124–129 (KHEKRR) are interaction with RNA. Residues Asp-154 and 191-194 (TEYE) contribute to the substrate site.

Belongs to the class I-like SAM-binding methyltransferase superfamily. TrmB family.

The enzyme catalyses guanosine(46) in tRNA + S-adenosyl-L-methionine = N(7)-methylguanosine(46) in tRNA + S-adenosyl-L-homocysteine. It participates in tRNA modification; N(7)-methylguanine-tRNA biosynthesis. Its function is as follows. Catalyzes the formation of N(7)-methylguanine at position 46 (m7G46) in tRNA. The protein is tRNA (guanine-N(7)-)-methyltransferase of Streptococcus uberis (strain ATCC BAA-854 / 0140J).